Here is a 522-residue protein sequence, read N- to C-terminus: Type-2 serine--tRNA ligase (522 aa).

Ala-319 contacts L-serine. Cys-321 contributes to the Zn(2+) binding site. Position 350 (Arg-350) interacts with L-serine. Residues Arg-350–Glu-352 and Arg-361–Val-362 each bind ATP. Arg-367–Glu-369 lines the L-serine pocket. Zn(2+) contacts are provided by Glu-369 and Cys-476. Residue Arg-483 participates in ATP binding.

It belongs to the class-II aminoacyl-tRNA synthetase family. Type-2 seryl-tRNA synthetase subfamily. Homodimer. Requires Zn(2+) as cofactor.

The protein resides in the cytoplasm. It catalyses the reaction tRNA(Ser) + L-serine + ATP = L-seryl-tRNA(Ser) + AMP + diphosphate + H(+). It carries out the reaction tRNA(Sec) + L-serine + ATP = L-seryl-tRNA(Sec) + AMP + diphosphate + H(+). The protein operates within aminoacyl-tRNA biosynthesis; selenocysteinyl-tRNA(Sec) biosynthesis; L-seryl-tRNA(Sec) from L-serine and tRNA(Sec): step 1/1. Functionally, catalyzes the attachment of serine to tRNA(Ser). Is also able to aminoacylate tRNA(Sec) with serine, to form the misacylated tRNA L-seryl-tRNA(Sec), which will be further converted into selenocysteinyl-tRNA(Sec). The polypeptide is Type-2 serine--tRNA ligase (serS) (Methanococcus aeolicus (strain ATCC BAA-1280 / DSM 17508 / OCM 812 / Nankai-3)).